We begin with the raw amino-acid sequence, 212 residues long: MAKQYDVLFRLLLIGDSGVGKTCLLCRFTDNEFHSSHISTIGVDFKMKTIDVDGIKVRIQIWDTAGQERYQTITKQYYRRAQGIFLVYDISSERSYQHIMKWVSDVDEYAPEGVQKILIGNKADEEQKRQVGREQGQQLAKEYGMDFYETSACTNLNIKESFTRLTELVLQAHRKELDGLRTRASNELALAELEEDEGKPEGPANSSKTCWC.

Ser17, Gly18, Val19, Gly20, Lys21, Thr22, Cys23, Ser35, Ser39, and Thr40 together coordinate GTP. A Mg(2+)-binding site is contributed by Thr22. 2 short sequence motifs (switch) span residues 31–45 and 63–80; these read NEFHSSHISTIGVDF and DTAGQERYQTITKQYYRR. Positions 40 and 63 each coordinate Mg(2+). GTP contacts are provided by Gly66, Asn121, Lys122, Asp124, Ser151, and Ala152. The interval 192–212 is disordered; that stretch reads ELEEDEGKPEGPANSSKTCWC. Residues Cys210 and Cys212 are each lipidated (S-geranylgeranyl cysteine). Cys212 is subject to Cysteine methyl ester.

Belongs to the small GTPase superfamily. Rab family. As to quaternary structure, the GTP bound form of RAB15 interacts with REP15. Interacts (GTP-bound form) with MICAL1, MICAL3, MICALCL, EHBP1 and EHBP1L1. It depends on Mg(2+) as a cofactor.

It is found in the cell membrane. It carries out the reaction GTP + H2O = GDP + phosphate + H(+). Its activity is regulated as follows. Regulated by guanine nucleotide exchange factors (GEFs) which promote the exchange of bound GDP for free GTP. Regulated by GTPase activating proteins (GAPs) which increase the GTP hydrolysis activity. Inhibited by GDP dissociation inhibitors (GDIs). Functionally, the small GTPases Rab are key regulators of intracellular membrane trafficking, from the formation of transport vesicles to their fusion with membranes. Rabs cycle between an inactive GDP-bound form and an active GTP-bound form that is able to recruit to membranes different sets of downstream effectors directly responsible for vesicle formation, movement, tethering and fusion. RAB15 may act in concert with RAB3A in regulating aspects of synaptic vesicle membrane flow within the nerve terminal. In Mus musculus (Mouse), this protein is Ras-related protein Rab-15.